Here is a 704-residue protein sequence, read N- to C-terminus: DNA ligase (704 aa).

NAD(+)-binding positions include 43 to 47 (DADYD), 92 to 93 (SL), and Glu-124. The active-site N6-AMP-lysine intermediate is Lys-126. Residues Arg-147, Glu-182, Lys-298, and Lys-322 each contribute to the NAD(+) site. Zn(2+) contacts are provided by Cys-427, Cys-430, Cys-445, and Cys-451. Positions 625–704 (PVASPVAGKI…DGWLRLIGDA (80 aa)) constitute a BRCT domain.

The protein belongs to the NAD-dependent DNA ligase family. LigA subfamily. Mg(2+) serves as cofactor. Mn(2+) is required as a cofactor.

It catalyses the reaction NAD(+) + (deoxyribonucleotide)n-3'-hydroxyl + 5'-phospho-(deoxyribonucleotide)m = (deoxyribonucleotide)n+m + AMP + beta-nicotinamide D-nucleotide.. In terms of biological role, DNA ligase that catalyzes the formation of phosphodiester linkages between 5'-phosphoryl and 3'-hydroxyl groups in double-stranded DNA using NAD as a coenzyme and as the energy source for the reaction. It is essential for DNA replication and repair of damaged DNA. This chain is DNA ligase, found in Cereibacter sphaeroides (strain ATCC 17023 / DSM 158 / JCM 6121 / CCUG 31486 / LMG 2827 / NBRC 12203 / NCIMB 8253 / ATH 2.4.1.) (Rhodobacter sphaeroides).